Reading from the N-terminus, the 89-residue chain is Large ribosomal subunit protein bL31B (89 aa).

The protein belongs to the bacterial ribosomal protein bL31 family. Type B subfamily. As to quaternary structure, part of the 50S ribosomal subunit.

The polypeptide is Large ribosomal subunit protein bL31B (Enterococcus faecalis (strain ATCC 700802 / V583)).